We begin with the raw amino-acid sequence, 179 residues long: Casparian strip membrane protein 1 (179 aa).

Topologically, residues 1–17 (MKAGPLQLGVVPPANRA) are cytoplasmic. A helical membrane pass occupies residues 18–38 (IAILDFFLRPIAIVGTLASAI). At 39–67 (AMATTNQTLPFFSQFIRFRAKFNDLPSFT) the chain is on the extracellular side. A glycan (N-linked (GlcNAc...) asparagine) is linked at Asn44. The chain crosses the membrane as a helical span at residues 68-88 (FFVVASSIVSAYLILSLGFSI). The Cytoplasmic portion of the chain corresponds to 89-100 (LHIAKSNLVNSR). Residues 101–121 (VLLLLLDTAAMGLLMAGSAAA) form a helical membrane-spanning segment. Over 122 to 154 (TAIVQLAHKGNNKVNWFAICQQYNSFCKRVSGS) the chain is Extracellular. A helical membrane pass occupies residues 155 to 175 (LIGSYAGVVVLILLILLSGVA). Residues 176 to 179 (LSRR) are Cytoplasmic-facing.

This sequence belongs to the Casparian strip membrane proteins (CASP) family. In terms of assembly, homodimer and heterodimers.

The protein localises to the cell membrane. Functionally, regulates membrane-cell wall junctions and localized cell wall deposition. Required for establishment of the Casparian strip membrane domain (CSD) and the subsequent formation of Casparian strips, a cell wall modification of the root endodermis that determines an apoplastic barrier between the intraorganismal apoplasm and the extraorganismal apoplasm and prevents lateral diffusion. This is Casparian strip membrane protein 1 from Lactuca sativa (Garden lettuce).